A 252-amino-acid chain; its full sequence is Triosephosphate isomerase (252 aa).

Residue Asn-9–Lys-11 participates in substrate binding. His-100 (electrophile) is an active-site residue. Glu-171 functions as the Proton acceptor in the catalytic mechanism. Residues Gly-177, Ser-216, and Gly-237–Gly-238 each bind substrate.

It belongs to the triosephosphate isomerase family. In terms of assembly, homodimer.

The protein resides in the cytoplasm. It carries out the reaction D-glyceraldehyde 3-phosphate = dihydroxyacetone phosphate. It functions in the pathway carbohydrate biosynthesis; gluconeogenesis. It participates in carbohydrate degradation; glycolysis; D-glyceraldehyde 3-phosphate from glycerone phosphate: step 1/1. Involved in the gluconeogenesis. Catalyzes stereospecifically the conversion of dihydroxyacetone phosphate (DHAP) to D-glyceraldehyde-3-phosphate (G3P). This chain is Triosephosphate isomerase, found in Polynucleobacter necessarius subsp. necessarius (strain STIR1).